The sequence spans 520 residues: Probable methylmalonate-semialdehyde/malonate-semialdehyde dehydrogenase [acylating], mitochondrial (520 aa).

NAD(+) contacts are provided by Ala-169, Phe-171, Lys-195, Glu-198, Arg-199, and Ser-248. Catalysis depends on Cys-303, which acts as the Nucleophile. Glu-403 is a binding site for NAD(+).

Belongs to the aldehyde dehydrogenase family. As to quaternary structure, homotetramer.

Its subcellular location is the mitochondrion. The catalysed reaction is 2-methyl-3-oxopropanoate + NAD(+) + CoA + H2O = propanoyl-CoA + hydrogencarbonate + NADH + H(+). It catalyses the reaction 3-oxopropanoate + NAD(+) + CoA + H2O = hydrogencarbonate + acetyl-CoA + NADH + H(+). Probable malonate and methylmalonate semialdehyde dehydrogenase involved in the catabolism of valine, thymine, and compounds catabolized by way of beta-alanine, including uracil and cytidine. The protein is Probable methylmalonate-semialdehyde/malonate-semialdehyde dehydrogenase [acylating], mitochondrial of Drosophila melanogaster (Fruit fly).